We begin with the raw amino-acid sequence, 331 residues long: Undecaprenyl-phosphate 4-deoxy-4-formamido-L-arabinose transferase (331 aa).

Helical transmembrane passes span 236 to 256 (LSIV…FLIL) and 270 to 290 (VFPL…GLGL).

This sequence belongs to the glycosyltransferase 2 family.

Its subcellular location is the cell inner membrane. It carries out the reaction UDP-4-deoxy-4-formamido-beta-L-arabinose + di-trans,octa-cis-undecaprenyl phosphate = 4-deoxy-4-formamido-alpha-L-arabinopyranosyl di-trans,octa-cis-undecaprenyl phosphate + UDP. Its pathway is glycolipid biosynthesis; 4-amino-4-deoxy-alpha-L-arabinose undecaprenyl phosphate biosynthesis; 4-amino-4-deoxy-alpha-L-arabinose undecaprenyl phosphate from UDP-4-deoxy-4-formamido-beta-L-arabinose and undecaprenyl phosphate: step 1/2. It functions in the pathway bacterial outer membrane biogenesis; lipopolysaccharide biosynthesis. Its function is as follows. Catalyzes the transfer of 4-deoxy-4-formamido-L-arabinose from UDP to undecaprenyl phosphate. The modified arabinose is attached to lipid A and is required for resistance to polymyxin and cationic antimicrobial peptides. The chain is Undecaprenyl-phosphate 4-deoxy-4-formamido-L-arabinose transferase from Shewanella sediminis (strain HAW-EB3).